We begin with the raw amino-acid sequence, 759 residues long: Phosphoribosylformylglycinamidine synthase subunit PurL (759 aa).

His-48 is an active-site residue. Tyr-51 and Lys-91 together coordinate ATP. Position 93 (Glu-93) interacts with Mg(2+). Substrate-binding positions include 94-97 and Arg-116; that span reads SHNH. Catalysis depends on His-95, which acts as the Proton acceptor. Residue Asp-117 participates in Mg(2+) binding. Gln-240 serves as a coordination point for substrate. Asp-268 serves as a coordination point for Mg(2+). 317–319 lines the substrate pocket; sequence ESQ. ATP-binding residues include Asn-501 and Gly-538. Asn-539 lines the Mg(2+) pocket. Ser-541 is a substrate binding site.

This sequence belongs to the FGAMS family. In terms of assembly, monomer. Part of the FGAM synthase complex composed of 1 PurL, 1 PurQ and 2 PurS subunits.

The protein localises to the cytoplasm. The catalysed reaction is N(2)-formyl-N(1)-(5-phospho-beta-D-ribosyl)glycinamide + L-glutamine + ATP + H2O = 2-formamido-N(1)-(5-O-phospho-beta-D-ribosyl)acetamidine + L-glutamate + ADP + phosphate + H(+). Its pathway is purine metabolism; IMP biosynthesis via de novo pathway; 5-amino-1-(5-phospho-D-ribosyl)imidazole from N(2)-formyl-N(1)-(5-phospho-D-ribosyl)glycinamide: step 1/2. In terms of biological role, part of the phosphoribosylformylglycinamidine synthase complex involved in the purines biosynthetic pathway. Catalyzes the ATP-dependent conversion of formylglycinamide ribonucleotide (FGAR) and glutamine to yield formylglycinamidine ribonucleotide (FGAM) and glutamate. The FGAM synthase complex is composed of three subunits. PurQ produces an ammonia molecule by converting glutamine to glutamate. PurL transfers the ammonia molecule to FGAR to form FGAM in an ATP-dependent manner. PurS interacts with PurQ and PurL and is thought to assist in the transfer of the ammonia molecule from PurQ to PurL. The chain is Phosphoribosylformylglycinamidine synthase subunit PurL from Chlorobaculum tepidum (strain ATCC 49652 / DSM 12025 / NBRC 103806 / TLS) (Chlorobium tepidum).